A 391-amino-acid polypeptide reads, in one-letter code: Probable dual-specificity RNA methyltransferase RlmN (391 aa).

A disordered region spans residues 1 to 33 (MTTPLDTPTREPLPLAPAGPGKLVMSAPRRGKP). Positions 12-21 (PLPLAPAGPG) are enriched in low complexity. The Proton acceptor role is filled by E124. One can recognise a Radical SAM core domain in the interval 130–373 (YKNRDTICIS…TTVRDTRGSD (244 aa)). An intrachain disulfide couples C137 to C378. The [4Fe-4S] cluster site is built by C144, C148, and C151. S-adenosyl-L-methionine contacts are provided by residues 199–200 (GE), S233, 256–258 (SLH), and N335. Residue C378 is the S-methylcysteine intermediate of the active site.

This sequence belongs to the radical SAM superfamily. RlmN family. [4Fe-4S] cluster serves as cofactor.

The protein localises to the cytoplasm. The catalysed reaction is adenosine(2503) in 23S rRNA + 2 reduced [2Fe-2S]-[ferredoxin] + 2 S-adenosyl-L-methionine = 2-methyladenosine(2503) in 23S rRNA + 5'-deoxyadenosine + L-methionine + 2 oxidized [2Fe-2S]-[ferredoxin] + S-adenosyl-L-homocysteine. It catalyses the reaction adenosine(37) in tRNA + 2 reduced [2Fe-2S]-[ferredoxin] + 2 S-adenosyl-L-methionine = 2-methyladenosine(37) in tRNA + 5'-deoxyadenosine + L-methionine + 2 oxidized [2Fe-2S]-[ferredoxin] + S-adenosyl-L-homocysteine. Specifically methylates position 2 of adenine 2503 in 23S rRNA and position 2 of adenine 37 in tRNAs. The sequence is that of Probable dual-specificity RNA methyltransferase RlmN from Kineococcus radiotolerans (strain ATCC BAA-149 / DSM 14245 / SRS30216).